Reading from the N-terminus, the 438-residue chain is RNA polymerase sigma factor SigA (438 aa).

The span at 1-11 shows a compositional bias: basic residues; the sequence is MKKSKSKKKAA. The tract at residues 1-69 is disordered; it reads MKKSKSKKKA…PLDLEGPLEA (69 aa). A compositionally biased stretch (basic and acidic residues) spans 12 to 26; that stretch reads KAQEVEVKEPVKEPE. 2 stretches are compositionally biased toward acidic residues: residues 27-45 and 52-69; these read PLPE…EPDP and PELE…PLEA. Residues 93 to 128 form a sigma-70 factor domain-1 region; the sequence is SDPVRQYLHEIGQVPLLTLEEEIDLARKVEEGMEAI. The interval 202-272 is sigma-70 factor domain-2; it reads LIEANLRLVV…NRAIADQART (71 aa). The short motif at 226–229 is the Interaction with polymerase core subunit RpoC element; the sequence is DLIQ. A sigma-70 factor domain-3 region spans residues 281–359; it reads ETINKLSRTA…DENLPSPVEA (79 aa). A sigma-70 factor domain-4 region spans residues 372–424; it reads ALSKLSEREAMVLKLRKGLIDGREHTLEEVGAYFGVTRERIRQIENKALRKLK. A DNA-binding region (H-T-H motif) is located at residues 398-417; it reads LEEVGAYFGVTRERIRQIEN.

It belongs to the sigma-70 factor family. RpoD/SigA subfamily. As to quaternary structure, interacts transiently with the RNA polymerase catalytic core formed by RpoA, RpoB, RpoC and RpoZ (2 alpha, 1 beta, 1 beta' and 1 omega subunit) to form the RNA polymerase holoenzyme that can initiate transcription.

It localises to the cytoplasm. In terms of biological role, sigma factors are initiation factors that promote the attachment of RNA polymerase to specific initiation sites and are then released. This sigma factor is the primary sigma factor during exponential growth. In Thermus aquaticus, this protein is RNA polymerase sigma factor SigA.